Reading from the N-terminus, the 546-residue chain is Probable protein kinase UbiB (546 aa).

Positions D124–F502 constitute a Protein kinase domain. ATP-binding positions include L130–V138 and K153. Catalysis depends on D288, which acts as the Proton acceptor. The next 2 membrane-spanning stretches (helical) occupy residues Y501–P521 and E522–W542.

It belongs to the ABC1 family. UbiB subfamily.

The protein resides in the cell inner membrane. It functions in the pathway cofactor biosynthesis; ubiquinone biosynthesis [regulation]. Is probably a protein kinase regulator of UbiI activity which is involved in aerobic coenzyme Q (ubiquinone) biosynthesis. This Escherichia coli (strain SMS-3-5 / SECEC) protein is Probable protein kinase UbiB.